Here is a 361-residue protein sequence, read N- to C-terminus: Ankyrin repeat domain-containing protein 16 (361 aa).

ANK repeat units lie at residues Ala36–Ala66, Asp70–Cys99, Ala103–Leu132, Asp136–Lys165, Ile170–Tyr200, Cys204–Ala234, Leu238–Val268, Thr273–Ser302, and Lys306–Glu335.

In terms of assembly, interacts with AARS; the interaction is direct.

Its subcellular location is the cytoplasm. The protein resides in the nucleus. Its function is as follows. Required to prevent the misactivation of serine (Ser) with tRNA(Ala) by promoting the hydrolysis of Ser-mischarged tRNA(Ala), thereby playing a role in translational fidelity. Binds directly to the catalytic domain of AARS/AlaRS and captures Ser that is misactivated by AARS/AlaRS, preventing the charging of Ser adenylates to tRNA(Ala) and precluding Ser misincorporation in nascent peptides. The polypeptide is Ankyrin repeat domain-containing protein 16 (Homo sapiens (Human)).